We begin with the raw amino-acid sequence, 92 residues long: uncharacterized protein (92 aa).

This is an uncharacterized protein from Homo sapiens (Human).